The following is a 438-amino-acid chain: MLQVATPTATEETQTVIEIEGRASLKGEVRISGAKNSALAIMAGTILCSDDCRLSNLPALADIDKMCQILAAIGVNLERDGDRLVVDSSNVGHGPAPYELVSQLRASFFVIGPLLSRLGMTKVPLPGGCAIGTRPVDLHVRGLQAMGADVHIEHGVVNASIKGHSRRLTGAKIYLDYPSVGATETILMAATLAEGETVIDNAAREPEIVDLANFCRSMGAQIRGDGSSRIIINGVEKLHSTDFPIIPDRIEAATFLCAGAITHSEISLFPVVPDHLASAIAKLREIGPEVAIDAPDRVRLIPRDLRGTDIETLPYPGFPTDMQAQFMALLAVSEGNSVVTETVFENRLQHVAELQRMGANIKLKGNAAFIQGVPFLSGAPVMSTDLRASAALVIAGLAAEGKTIVQGLRHLDRGYEDIEGKLRKLGAKLTRIEQPVTL.

Phosphoenolpyruvate is bound at residue 35–36 (KN). A UDP-N-acetyl-alpha-D-glucosamine-binding site is contributed by arginine 105. Cysteine 129 (proton donor) is an active-site residue. At cysteine 129 the chain carries 2-(S-cysteinyl)pyruvic acid O-phosphothioketal. Residues 134 to 138 (RPVDL), aspartate 321, and valine 343 contribute to the UDP-N-acetyl-alpha-D-glucosamine site.

This sequence belongs to the EPSP synthase family. MurA subfamily.

Its subcellular location is the cytoplasm. The enzyme catalyses phosphoenolpyruvate + UDP-N-acetyl-alpha-D-glucosamine = UDP-N-acetyl-3-O-(1-carboxyvinyl)-alpha-D-glucosamine + phosphate. The protein operates within cell wall biogenesis; peptidoglycan biosynthesis. In terms of biological role, cell wall formation. Adds enolpyruvyl to UDP-N-acetylglucosamine. This is UDP-N-acetylglucosamine 1-carboxyvinyltransferase from Synechocystis sp. (strain ATCC 27184 / PCC 6803 / Kazusa).